A 555-amino-acid chain; its full sequence is T-complex protein 1 subunit eta (555 aa).

This sequence belongs to the TCP-1 chaperonin family. Heterooligomeric complex of about 850 to 900 kDa that forms two stacked rings, 12 to 16 nm in diameter.

It is found in the cytoplasm. Functionally, molecular chaperone; assists the folding of proteins upon ATP hydrolysis. Known to play a role, in vitro, in the folding of actin and tubulin. The sequence is that of T-complex protein 1 subunit eta (cct7) from Dictyostelium discoideum (Social amoeba).